Consider the following 325-residue polypeptide: Undecaprenyl-phosphate 4-deoxy-4-formamido-L-arabinose transferase (325 aa).

The next 2 membrane-spanning stretches (helical) occupy residues 234–254 and 269–289; these read LLSV…LLLI and VFML…GMGL.

It belongs to the glycosyltransferase 2 family.

It localises to the cell inner membrane. The catalysed reaction is UDP-4-deoxy-4-formamido-beta-L-arabinose + di-trans,octa-cis-undecaprenyl phosphate = 4-deoxy-4-formamido-alpha-L-arabinopyranosyl di-trans,octa-cis-undecaprenyl phosphate + UDP. It functions in the pathway glycolipid biosynthesis; 4-amino-4-deoxy-alpha-L-arabinose undecaprenyl phosphate biosynthesis; 4-amino-4-deoxy-alpha-L-arabinose undecaprenyl phosphate from UDP-4-deoxy-4-formamido-beta-L-arabinose and undecaprenyl phosphate: step 1/2. It participates in bacterial outer membrane biogenesis; lipopolysaccharide biosynthesis. Functionally, catalyzes the transfer of 4-deoxy-4-formamido-L-arabinose from UDP to undecaprenyl phosphate. The modified arabinose is attached to lipid A and is required for resistance to polymyxin and cationic antimicrobial peptides. This Erwinia tasmaniensis (strain DSM 17950 / CFBP 7177 / CIP 109463 / NCPPB 4357 / Et1/99) protein is Undecaprenyl-phosphate 4-deoxy-4-formamido-L-arabinose transferase.